The sequence spans 506 residues: Exopolyphosphatase (506 aa).

Belongs to the GppA/Ppx family. In terms of assembly, homodimer. Mg(2+) is required as a cofactor.

It localises to the cell membrane. It carries out the reaction [phosphate](n) + H2O = [phosphate](n-1) + phosphate + H(+). The enzyme catalyses [phosphate](n) + ATP = [phosphate](n+1) + ADP. With respect to regulation, exopolyphosphatase activity is stimulated by NH(4)(+) and K(+). Phosphotransferase activity is insensitive to the addition of K(+) or NH(4)(+) ions. Degradation of inorganic polyphosphates (polyP). Releases orthophosphate processively from the ends of the polyP chain. Also has polyphosphate:ADP phosphotransferase activity, catalyzing the production of ATP from ADP and polyP. This chain is Exopolyphosphatase, found in Pseudomonas aeruginosa (strain ATCC 15692 / DSM 22644 / CIP 104116 / JCM 14847 / LMG 12228 / 1C / PRS 101 / PAO1).